The sequence spans 396 residues: Probable sugar efflux transporter (396 aa).

A run of 12 helical transmembrane segments spans residues 15–35 (VVTL…PVGL), 50–70 (VGIM…PFML), 81–101 (LICL…AWNF), 103–123 (VLVI…SITA), 136–156 (AQAL…GLPI), 169–189 (TFFA…KLLP), 209–229 (PALM…YTAY), 246–266 (FATV…LVFG), 275–295 (SLVS…LPAA), 301–321 (LAIL…GMQV), 333–353 (VAMA…ALVG), and 364–384 (AIGY…VLIF).

The protein belongs to the major facilitator superfamily. SotB (TC 2.A.1.2) family.

It localises to the cell inner membrane. Functionally, involved in the efflux of sugars. The physiological role may be the reduction of the intracellular concentration of toxic sugars or sugar metabolites. This is Probable sugar efflux transporter from Salmonella schwarzengrund (strain CVM19633).